Here is a 1254-residue protein sequence, read N- to C-terminus: Structural polyprotein (1254 aa).

Positions 1-33 (MFPFQPMYPMQPMPYRNPFAAPRRPWFPRTDPF) are necessary for nucleocapsid assembly and virus assembly. Residues 33 to 68 (FLAMQVQELTRSMANLTFKQRRDAPPEGPSAKKPKK) form a host transcription inhibition region. The Supraphysiological nuclear export signal signature appears at 41 to 48 (LTRSMANL). Residues 45–119 (MANLTFKQRR…KKPGKRQRMV (75 aa)) are disordered. Residues 64 to 68 (KKPKK) carry the Nuclear localization signal motif. Residues 80–92 (GKKKKNQGKKKAK) are compositionally biased toward basic residues. The tract at residues 91 to 127 (AKTGPPNPKAQNGNKKKTNKKPGKRQRMVMKLESDKT) is binding to the viral RNA. Threonine 93 and threonine 108 each carry phosphothreonine. Positions 104–118 (NKKKTNKKPGKRQRM) are enriched in basic residues. A ribosome-binding region spans residues 112 to 126 (PGKRQRMVMKLESDK). Position 124 is a phosphoserine (serine 124). In terms of domain architecture, Peptidase S3 spans 126-275 (KTFPIMLEGK…KYTPENCEQW (150 aa)). A Phosphothreonine modification is found at threonine 127. Active-site charge relay system residues include histidine 152, aspartate 174, and serine 226. The functions as an uncleaved signal peptide for the precursor of protein E3/E2 stretch occupies residues 276–287 (SLVTTMCLLANV). Residues 276–701 (SLVTTMCLLA…HYYHRYPMST (426 aa)) are Extracellular-facing. Asparagine 286, asparagine 546, and asparagine 652 each carry an N-linked (GlcNAc...) asparagine; by host glycan. A helical membrane pass occupies residues 702 to 722 (ILGLSICAAIATVSVAASTWL). Over 723–757 (FCRSRVACLTPYRLTPNARIPFCLAVLCCARTARA) the chain is Cytoplasmic. 3 S-palmitoyl cysteine; by host lipidation sites follow: cysteine 730, cysteine 750, and cysteine 751. Residues 758–772 (ETTWESLDHLWNNNQ) are Extracellular-facing. Residues 773 to 793 (QMFWIQLLIPLAALIVVTRLL) form a helical membrane-spanning segment. Residues 794–795 (RC) are Cytoplasmic-facing. The chain crosses the membrane as a helical span at residues 796–816 (VCCVVPFLVMAGAAAPAYEHA). Over 817 to 1224 (TTMPSQAGIS…SKTAWTWLTS (408 aa)) the chain is Extracellular. 4 disulfide bridges follow: cysteine 861-cysteine 926, cysteine 874-cysteine 906, cysteine 875-cysteine 908, and cysteine 880-cysteine 890. The E1 fusion peptide loop stretch occupies residues 896–913 (VYPFMWGGAYCFCDTENT). Residue asparagine 946 is glycosylated (N-linked (GlcNAc...) asparagine; by host). Disulfide bonds link cysteine 1071–cysteine 1083, cysteine 1113–cysteine 1188, cysteine 1118–cysteine 1192, and cysteine 1140–cysteine 1182. A helical membrane pass occupies residues 1225–1245 (LLGGSAVIIIIGLVLATIVAM). Residues 1246-1254 (YVLTNQKHN) are Cytoplasmic-facing.

In terms of assembly, homodimer. Homomultimer. Interacts with host karyopherin KPNA4; this interaction allows the nuclear import of the viral capsid protein. Interacts with spike glycoprotein E2. Interacts with host IRAK1; the interaction leads to inhibition of IRAK1-dependent signaling. Part of a tetrameric complex composed of host CRM1, host importin alpha/beta dimer and the viral capsid; this complex blocks the receptor-mediated transport through the nuclear pore. Interacts with host phosphatase PPP1CA; this interaction dephosphorylates the capsid protein, which increases its ability to bind to the viral genome. The precursor of protein E3/E2 and E1 form a heterodimer shortly after synthesis. As to quaternary structure, interacts with spike glycoprotein E2. The precursor of protein E3/E2 and E1 form a heterodimer shortly after synthesis. Processing of the precursor of protein E3/E2 into E2 and E3 results in a heterodimer of the spike glycoproteins E2 and E1. Spike at virion surface are constituted of three E2-E1 heterodimers. After target cell attachment and endocytosis, E1 change conformation to form homotrimers. Interacts with 6K protein. Interacts (via fusion peptide loop) with host LDLRAD3 (via domain LDL-receptor class A 1); this interaction mediates viral entry to the host cell. 2 adjacent E2-E1 heterodimers in the trimeric spike interact with host LDLRAD3. In terms of assembly, interacts with spike glycoprotein E1. Processing of the precursor of protein E3/E2 into E2 and E3 results in a heterodimer of the spike glycoproteins E2 and E1. Spike at virion surface are constituted of a trimer of E2-E1 heterodimers. Interacts with 6K protein. Interacts with host LDLRAD3 (via domain LDL-receptor class A 1); this interaction mediates viral entry to the host cell. 2 adjacent E2-E1 heterodimers in the trimeric spike interact with host LDLRAD3. Oligomer. Interacts with spike glycoprotein E1. Interacts with spike glycoprotein E2. Post-translationally, structural polyprotein: Specific enzymatic cleavages in vivo yield mature proteins. Capsid protein is auto-cleaved during polyprotein translation, unmasking a signal peptide at the N-terminus of the precursor of E3/E2. The remaining polyprotein is then targeted to the host endoplasmic reticulum, where host signal peptidase cleaves it into pE2, 6K and E1 proteins. pE2 is further processed to mature E3 and E2 by host furin in trans-Golgi vesicle. In terms of processing, phosphorylated on serine and threonine residues. Palmitoylated via thioester bonds. These palmitoylations may induce disruption of the C-terminus transmembrane. This would result in the reorientation of E2 C-terminus from lumenal to cytoplasmic side. Post-translationally, N-glycosylated. In terms of processing, palmitoylated via thioester bonds.

The protein resides in the virion. It is found in the host cytoplasm. The protein localises to the host cell membrane. Its subcellular location is the host nucleus. It localises to the virion membrane. The catalysed reaction is Autocatalytic release of the core protein from the N-terminus of the togavirus structural polyprotein by hydrolysis of a -Trp-|-Ser- bond.. Its function is as follows. Forms an icosahedral capsid with a T=4 symmetry composed of 240 copies of the capsid protein surrounded by a lipid membrane through which penetrate 80 spikes composed of trimers of E1-E2 heterodimers. The capsid protein binds to the viral RNA genome at a site adjacent to a ribosome binding site for viral genome translation following genome release. Possesses a protease activity that results in its autocatalytic cleavage from the nascent structural protein. Following its self-cleavage, the capsid protein transiently associates with ribosomes, and within several minutes the protein binds to viral RNA and rapidly assembles into icosahedric core particles. The resulting nucleocapsid eventually associates with the cytoplasmic domain of the spike glycoprotein E2 at the cell membrane, leading to budding and formation of mature virions. In case of infection, new virions attach to target cells and after clathrin-mediated endocytosis their membrane fuses with the host endosomal membrane. This leads to the release of the nucleocapsid into the cytoplasm, followed by an uncoating event necessary for the genomic RNA to become accessible. The uncoating might be triggered by the interaction of capsid proteins with ribosomes. Binding of ribosomes would release the genomic RNA since the same region is genomic RNA-binding and ribosome-binding. Specifically inhibits interleukin-1 receptor-associated kinase 1/IRAK1-dependent signaling during viral entry, representing a means by which the alphaviruses may evade innate immune detection and activation prior to viral gene expression. Inhibits host transcription. Forms a tetrameric complex with XPO1/CRM1 and the nuclear import receptor importin. This complex blocks the central channel of host nuclear pores thereby inhibiting the receptor-mediated nuclear transport and thus the host mRNA and rRNA transcription. The inhibition of transcription is linked to a cytopathic effect on the host cell. Functionally, provides the signal sequence for the translocation of the precursor of protein E3/E2 to the host endoplasmic reticulum. Furin-cleaved E3 remains associated with spike glycoprotein E1 and mediates pH protection of the latter during the transport via the secretory pathway. After virion release from the host cell, the assembly protein E3 is gradually released in the extracellular space. In terms of biological role, plays a role in viral attachment to target host cell, by binding to the cell receptor LDLRAD3. Synthesized as a p62 precursor which is processed by furin at the cell membrane just before virion budding, giving rise to E2-E1 heterodimer. The p62-E1 heterodimer is stable, whereas E2-E1 is unstable and dissociate at low pH. p62 is processed at the last step, presumably to avoid E1 fusion activation before its final export to cell surface. E2 C-terminus contains a transitory transmembrane that would be disrupted by palmitoylation, resulting in reorientation of the C-terminal tail from lumenal to cytoplasmic side. This step is critical since E2 C-terminus is involved in budding by interacting with capsid proteins. This release of E2 C-terminus in cytoplasm occurs lately in protein export, and precludes premature assembly of particles at the endoplasmic reticulum membrane. Acts as a viroporin that participates in virus glycoprotein processing and transport to the plasma membrane, cell permeabilization and budding of viral particles. Disrupts the calcium homeostasis of the cell, probably at the endoplasmic reticulum level. This leads to cytoplasmic calcium elevation. Because of its lipophilic properties, the 6K protein is postulated to influence the selection of lipids that interact with the transmembrane domains of the glycoproteins, which, in turn, affects the deformability of the bilayer required for the extreme curvature that occurs as budding proceeds. Present in low amount in virions, about 3% compared to viral glycoproteins. Its function is as follows. Class II viral fusion protein. Fusion activity is inactive as long as E1 is bound to E2 in mature virion. After virus attachment to cell receptor LDLRAD3 and endocytosis, acidification of the endosome induce dissociation of E1/E2 heterodimer and concomitant trimerization of the E1 subunits. This E1 trimer is fusion active, and promotes release of viral nucleocapsid in cytoplasm after endosome and viral membrane fusion. Efficient fusion requires the presence of cholesterol and sphingolipid in the target membrane. The chain is Structural polyprotein from Bos taurus (Bovine).